A 355-amino-acid chain; its full sequence is Peptide chain release factor 1 (355 aa).

Gln-231 is modified (N5-methylglutamine).

It belongs to the prokaryotic/mitochondrial release factor family. Post-translationally, methylated by PrmC. Methylation increases the termination efficiency of RF1.

Its subcellular location is the cytoplasm. Its function is as follows. Peptide chain release factor 1 directs the termination of translation in response to the peptide chain termination codons UAG and UAA. The polypeptide is Peptide chain release factor 1 (Wolinella succinogenes (strain ATCC 29543 / DSM 1740 / CCUG 13145 / JCM 31913 / LMG 7466 / NCTC 11488 / FDC 602W) (Vibrio succinogenes)).